A 406-amino-acid polypeptide reads, in one-letter code: NADH-quinone oxidoreductase subunit D (406 aa).

This sequence belongs to the complex I 49 kDa subunit family. As to quaternary structure, NDH-1 is composed of 14 different subunits. Subunits NuoB, C, D, E, F, and G constitute the peripheral sector of the complex.

It is found in the cell inner membrane. The enzyme catalyses a quinone + NADH + 5 H(+)(in) = a quinol + NAD(+) + 4 H(+)(out). Its function is as follows. NDH-1 shuttles electrons from NADH, via FMN and iron-sulfur (Fe-S) centers, to quinones in the respiratory chain. The immediate electron acceptor for the enzyme in this species is believed to be ubiquinone. Couples the redox reaction to proton translocation (for every two electrons transferred, four hydrogen ions are translocated across the cytoplasmic membrane), and thus conserves the redox energy in a proton gradient. The sequence is that of NADH-quinone oxidoreductase subunit D from Leptospira biflexa serovar Patoc (strain Patoc 1 / Ames).